Here is a 55-residue protein sequence, read N- to C-terminus: MAKGAREKIKLESTAGTGHFYTTSKNKRTTPNKLEFNKYDPVVRKHVLYKEIKLK.

This sequence belongs to the bacterial ribosomal protein bL33 family.

This Aromatoleum aromaticum (strain DSM 19018 / LMG 30748 / EbN1) (Azoarcus sp. (strain EbN1)) protein is Large ribosomal subunit protein bL33.